Reading from the N-terminus, the 111-residue chain is Gastrula zinc finger protein XlCGF32.1 (111 aa).

C2H2-type zinc fingers lie at residues 6-28 (FDCT…FLCH), 34-56 (FVCV…LRIH), 62-84 (SVCP…MRIH), and 89-111 (FMCS…LQIH).

The protein belongs to the krueppel C2H2-type zinc-finger protein family.

It is found in the nucleus. Its function is as follows. May be involved in transcriptional regulation. The polypeptide is Gastrula zinc finger protein XlCGF32.1 (Xenopus laevis (African clawed frog)).